The primary structure comprises 422 residues: MIANSSTDVSVADQKFLNVAKSNQIDPDAVPISRLDSEGHSIFAEWRPKRPFLRREDGIFLVLRADHIFLLGTDPRTRQIETELMLNRGVKAGAVFDFIDHSMLFSNGETHGKRRSGLSKAFSFRMVEALRPEIAKITECLWDDLQKVDDFNFTEMYASQLPALTIASVLGLPSEDTPFFTRLVYKVSRCLSPSWRDEEFEEIEASAIELQDYVRSVIADSGRRMRDDFLSRYLKAVREAGTLSPIEEIMQLMLIILAGSDTTRTAMVMVTALALQNPALWSSLRGNQSYVAAAVEEGLRFEPPVGSFPRLALKDIDLDGYVLPKGSLLALSVMSGLRDEKHYEHPQLFDVGRQQMRWHLGFGAGVHRCLGETLARIELQEGLRTLLRRAPNLAVVGDWPRMMGHGGIRRATDMMVKLSFDL.

Position 369 (Cys-369) interacts with heme.

It belongs to the cytochrome P450 family. Heme serves as cofactor.

In terms of biological role, not essential for virulence, but may be involved in the detoxification of plant protective agents at the site of wounding. The protein is Cytochrome P450-pinF1, plant-inducible (cyp103) of Rhizobium radiobacter (Agrobacterium tumefaciens).